The chain runs to 635 residues: PTS system mannitol-specific EIICBA component (635 aa).

One can recognise a PTS EIIC type-2 domain in the interval F12–R342. The next 6 helical transmembrane spans lie at I24–N45, K50–K70, S134–E155, V165–K185, V273–V292, and F313–F334. Positions R378–D473 constitute a PTS EIIB type-2 domain. Residue C384 is the Phosphocysteine intermediate; for EIIB activity of the active site. C384 carries the post-translational modification Phosphocysteine; by EIIA. The region spanning F494–K635 is the PTS EIIA type-2 domain. The Tele-phosphohistidine intermediate; for EIIA activity role is filled by H554. The residue at position 554 (H554) is a Phosphohistidine; by HPr.

As to quaternary structure, homodimer. An intramolecular phosphotransfer takes places between His-554 and Cys-384.

The protein resides in the cell inner membrane. The catalysed reaction is D-mannitol(out) + N(pros)-phospho-L-histidyl-[protein] = D-mannitol 1-phosphate(in) + L-histidyl-[protein]. Functionally, the phosphoenolpyruvate-dependent sugar phosphotransferase system (sugar PTS), a major carbohydrate active transport system, catalyzes the phosphorylation of incoming sugar substrates concomitantly with their translocation across the cell membrane. This system is involved in D-mannitol transport. The sequence is that of PTS system mannitol-specific EIICBA component from Klebsiella pneumoniae.